The chain runs to 241 residues: Endonuclease NucS (241 aa).

It belongs to the NucS endonuclease family.

It is found in the cytoplasm. Cleaves both 3' and 5' ssDNA extremities of branched DNA structures. This Corynebacterium jeikeium (strain K411) protein is Endonuclease NucS.